A 468-amino-acid chain; its full sequence is tRNA threonylcarbamoyladenosine dehydratase (468 aa).

The next 3 helical transmembrane spans lie at 15 to 35 (FWIA…TLEF), 109 to 129 (NSFV…NMLA), and 315 to 335 (ILPV…TYVL).

It belongs to the HesA/MoeB/ThiF family.

It localises to the mitochondrion outer membrane. Catalyzes the ATP-dependent dehydration of threonylcarbamoyladenosine at position 37 (t(6)A37) to form cyclic t(6)A37 (ct(6)A37) in tRNAs that read codons beginning with adenine. This Schizosaccharomyces pombe (strain 972 / ATCC 24843) (Fission yeast) protein is tRNA threonylcarbamoyladenosine dehydratase (tcd1).